A 79-amino-acid polypeptide reads, in one-letter code: Hematopoietic cell signal transducer (79 aa).

An N-terminal signal peptide occupies residues methionine 1–alanine 18. The Extracellular segment spans residues glutamine 19–leucine 35. The chain crosses the membrane as a helical span at residues leucine 36 to valine 56. Over cysteine 57 to glycine 79 the chain is Cytoplasmic. A Phosphotyrosine modification is found at tyrosine 72. Positions tyrosine 72–asparagine 74 are GRB2 binding site. The tract at residues tyrosine 72–methionine 75 is PIK3R1 binding site.

Belongs to the DAP10 family. Homodimer; Disulfide-linked. Heterohexamer composed of four subunits of HCST/DAP10 and two subunits of KLRK1. Interacts (via transmembrane domain) with KLRK1 (via transmembrane domain); the interaction is required for KLRK1 NK cell surface and induces NK cell-mediated cytotoxicity. Interacts with PIK3R1 and GRB2. Interacts with CLEC5A. Forms an CLEC5A/TYROBP/HCST trimolecular complex depending almost solely on TYROBP. Interacts with KLRK1. Interacts with CD300H. Phosphorylated; PIK3R1 and GRB2 associate specifically with tyrosine-phosphorylated HCST. In terms of processing, O-glycosylated.

Its subcellular location is the membrane. Transmembrane adapter protein which associates with KLRK1 to form an activation receptor KLRK1-HCST in lymphoid and myeloid cells; this receptor plays a major role in triggering cytotoxicity against target cells expressing cell surface ligands such as MHC class I chain-related MICA and MICB, and UL16-binding proteins (ULBPs); these ligands are up-regulated by stress conditions and pathological state such as viral infection and tumor transformation. Functions as a docking site for PI3-kinase PIK3R1 and GRB2. Interaction of ULBPs with KLRK1-HCST triggers calcium mobilization and activation of the PIK3R1, MAP2K/ERK, and JAK2/STAT5 signaling pathways. Both PIK3R1 and GRB2 are required for full KLRK1-HCST-mediated activation and ultimate killing of target cells. In NK cells, KLRK1-HCST signaling directly induces cytotoxicity and enhances cytokine production initiated via DAP12/TYROBP-associated receptors. In T-cells, it provides primarily costimulation for TCR-induced signals. KLRK1-HCST receptor plays a role in immune surveillance against tumors and is required for cytolysis of tumors cells; indeed, melanoma cells that do not express KLRK1 ligands escape from immune surveillance mediated by NK cells. This chain is Hematopoietic cell signal transducer (HCST), found in Bos taurus (Bovine).